Here is a 510-residue protein sequence, read N- to C-terminus: NAD(P)H-quinone oxidoreductase subunit 2 A, chloroplastic (510 aa).

The next 12 membrane-spanning stretches (helical) occupy residues 31–51, 59–79, 99–119, 124–144, 149–169, 183–203, 229–249, 295–315, 323–343, 354–374, 395–415, and 418–438; these read FIFPECILIFGLILLLMIDLT, WFYFISSTSLVISITALLFRW, IFQFLILLCSTLCIPLSVEYI, MAITEFLLFVLTATLGGMFLC, LITIFVAPECFSLCSYLLSGY, YLLMGGASSSILVHGFSWLYG, ISIALISITVGLGFKLSPAPF, WHLLLEILAILSMILGNLLAI, MLAYSSIGQIGYVIIGIIVGD, YMLFYISMNLGTFACIVLFGL, ALSLALCLLSLGGLPPLAGFF, and LYLFWCGWQAGLYFLVSIGLL.

Belongs to the complex I subunit 2 family. NDH is composed of at least 16 different subunits, 5 of which are encoded in the nucleus.

The protein resides in the plastid. Its subcellular location is the chloroplast thylakoid membrane. The enzyme catalyses a plastoquinone + NADH + (n+1) H(+)(in) = a plastoquinol + NAD(+) + n H(+)(out). It catalyses the reaction a plastoquinone + NADPH + (n+1) H(+)(in) = a plastoquinol + NADP(+) + n H(+)(out). In terms of biological role, NDH shuttles electrons from NAD(P)H:plastoquinone, via FMN and iron-sulfur (Fe-S) centers, to quinones in the photosynthetic chain and possibly in a chloroplast respiratory chain. The immediate electron acceptor for the enzyme in this species is believed to be plastoquinone. Couples the redox reaction to proton translocation, and thus conserves the redox energy in a proton gradient. The chain is NAD(P)H-quinone oxidoreductase subunit 2 A, chloroplastic from Oryza nivara (Indian wild rice).